The following is a 62-amino-acid chain: Large ribosomal subunit protein bL33 (62 aa).

Belongs to the bacterial ribosomal protein bL33 family.

In Acaryochloris marina (strain MBIC 11017), this protein is Large ribosomal subunit protein bL33.